A 200-amino-acid polypeptide reads, in one-letter code: Histone chaperone asf1b (200 aa).

Belongs to the ASF1 family. In terms of assembly, interacts with histone H3 and histone H4.

It localises to the nucleus. Histone chaperone that facilitates histone deposition and histone exchange and removal during nucleosome assembly and disassembly. The polypeptide is Histone chaperone asf1b (asf1b) (Xenopus tropicalis (Western clawed frog)).